A 306-amino-acid polypeptide reads, in one-letter code: Ornithine carbamoyltransferase (306 aa).

Carbamoyl phosphate contacts are provided by residues 53–56 (STRT), Q80, R104, and 131–134 (HPCQ). L-ornithine contacts are provided by residues N162, D219, and 223–224 (SM). Carbamoyl phosphate contacts are provided by residues 259-260 (CL) and R287.

It belongs to the aspartate/ornithine carbamoyltransferase superfamily. OTCase family.

It is found in the cytoplasm. It catalyses the reaction carbamoyl phosphate + L-ornithine = L-citrulline + phosphate + H(+). It participates in amino-acid biosynthesis; L-arginine biosynthesis; L-arginine from L-ornithine and carbamoyl phosphate: step 1/3. Reversibly catalyzes the transfer of the carbamoyl group from carbamoyl phosphate (CP) to the N(epsilon) atom of ornithine (ORN) to produce L-citrulline. The polypeptide is Ornithine carbamoyltransferase (Pseudomonas syringae pv. tomato (strain ATCC BAA-871 / DC3000)).